A 733-amino-acid chain; its full sequence is Putative cyclic nucleotide-gated ion channel 9 (733 aa).

The Cytoplasmic portion of the chain corresponds to 1–117 (MLDCGKKAVK…DKFLLLCNKL (117 aa)). Residues 118–138 (FVTSCILAVSVDPLFLYLPFV) traverse the membrane as a helical segment. The Extracellular segment spans residues 139–151 (KDNEKCIGIDRKL). Residues 152–172 (AIIATTLRTVIDAFYLFHMAL) traverse the membrane as a helical segment. Topologically, residues 173 to 207 (RFRTAFVAPSSRVFGRGELVIDPAQIAKRYLQQYF) are cytoplasmic. A helical transmembrane segment spans residues 208-228 (IIDFLSVLPLPQIVVWRFLYI). The Extracellular segment spans residues 229-239 (SKGASVLATKR). Residues 240 to 260 (ALRSIILVQYIPRFIRLYPLS) traverse the membrane as a helical segment. The Cytoplasmic segment spans residues 261-280 (SELKRTAGVFAETAWAGAAY). The chain crosses the membrane as a helical span at residues 281-301 (YLLLYMLASHIVGAIWYLLAL). The Extracellular portion of the chain corresponds to 302-406 (ERYNGCWTKV…GQGLETSTYP (105 aa)). Residues 407 to 427 (GEVIFSIALAIAGLLLFALLI) traverse the membrane as a helical segment. Residues 428 to 733 (GNMQTYLQSL…EPDFSADDTS (306 aa)) are Cytoplasmic-facing. Residues 513–637 (LFEN…SRQV) and Glu-584 contribute to the a nucleoside 3',5'-cyclic phosphate site. Residues 629–644 (FRRLHSRQVQHTFRFY) form a calmodulin-binding region. Residues 649–678 (RTWAAIFIQAAWRRYVKKKKLEQLRKEEEE) form the IQ domain.

Belongs to the cyclic nucleotide-gated cation channel (TC 1.A.1.5) family. Homotetramer or heterotetramer.

It is found in the cell membrane. Its function is as follows. Putative cyclic nucleotide-gated ion channel. The sequence is that of Putative cyclic nucleotide-gated ion channel 9 (CNGC9) from Arabidopsis thaliana (Mouse-ear cress).